The sequence spans 210 residues: Large ribosomal subunit protein uL3 (210 aa).

Residues 125–151 are disordered; that stretch reads RHGQSRGPMSHGSRYHRRPGSMGPVAP.

This sequence belongs to the universal ribosomal protein uL3 family. As to quaternary structure, part of the 50S ribosomal subunit. Forms a cluster with proteins L14 and L19.

In terms of biological role, one of the primary rRNA binding proteins, it binds directly near the 3'-end of the 23S rRNA, where it nucleates assembly of the 50S subunit. This chain is Large ribosomal subunit protein uL3, found in Bacillus cereus (strain Q1).